The sequence spans 200 residues: Imidazoleglycerol-phosphate dehydratase (200 aa).

Belongs to the imidazoleglycerol-phosphate dehydratase family.

Its subcellular location is the cytoplasm. The enzyme catalyses D-erythro-1-(imidazol-4-yl)glycerol 3-phosphate = 3-(imidazol-4-yl)-2-oxopropyl phosphate + H2O. It functions in the pathway amino-acid biosynthesis; L-histidine biosynthesis; L-histidine from 5-phospho-alpha-D-ribose 1-diphosphate: step 6/9. This is Imidazoleglycerol-phosphate dehydratase from Chlorobium phaeovibrioides (strain DSM 265 / 1930) (Prosthecochloris vibrioformis (strain DSM 265)).